Reading from the N-terminus, the 364-residue chain is 3-isopropylmalate dehydrogenase (364 aa).

79–92 (GPKWEHLPPDQQPE) is a binding site for NAD(+). Substrate contacts are provided by R100, R110, R139, and D228. Residues D228, D252, and D256 each coordinate Mg(2+). 286 to 298 (GSAPDIAGKNIAN) contacts NAD(+).

It belongs to the isocitrate and isopropylmalate dehydrogenases family. LeuB type 1 subfamily. Homodimer. Mg(2+) is required as a cofactor. It depends on Mn(2+) as a cofactor.

It localises to the cytoplasm. It carries out the reaction (2R,3S)-3-isopropylmalate + NAD(+) = 4-methyl-2-oxopentanoate + CO2 + NADH. The protein operates within amino-acid biosynthesis; L-leucine biosynthesis; L-leucine from 3-methyl-2-oxobutanoate: step 3/4. Catalyzes the oxidation of 3-carboxy-2-hydroxy-4-methylpentanoate (3-isopropylmalate) to 3-carboxy-4-methyl-2-oxopentanoate. The product decarboxylates to 4-methyl-2 oxopentanoate. This chain is 3-isopropylmalate dehydrogenase, found in Escherichia coli (strain UTI89 / UPEC).